Consider the following 175-residue polypeptide: Ribosome maturation factor RimM (175 aa).

In terms of domain architecture, PRC barrel spans Glu98 to Phe175.

The protein belongs to the RimM family. In terms of assembly, binds ribosomal protein uS19.

The protein localises to the cytoplasm. Its function is as follows. An accessory protein needed during the final step in the assembly of 30S ribosomal subunit, possibly for assembly of the head region. Essential for efficient processing of 16S rRNA. May be needed both before and after RbfA during the maturation of 16S rRNA. It has affinity for free ribosomal 30S subunits but not for 70S ribosomes. The sequence is that of Ribosome maturation factor RimM from Pseudomonas aeruginosa (strain UCBPP-PA14).